The following is a 431-amino-acid chain: Adenylosuccinate synthetase (431 aa).

GTP contacts are provided by residues 13-19 and 41-43; these read GDEGKGK and GHT. Asp-14 acts as the Proton acceptor in catalysis. Mg(2+) is bound by residues Asp-14 and Gly-41. IMP-binding positions include 14–17, 39–42, Thr-130, Arg-144, Gln-225, Thr-240, and Arg-304; these read DEGK and NAGH. Catalysis depends on His-42, which acts as the Proton donor. 300-306 provides a ligand contact to substrate; it reads ATTGRKR. Residues Arg-306, 332–334, and 415–417 each bind GTP; these read KLD and STG.

Belongs to the adenylosuccinate synthetase family. As to quaternary structure, homodimer. Mg(2+) is required as a cofactor.

Its subcellular location is the cytoplasm. It catalyses the reaction IMP + L-aspartate + GTP = N(6)-(1,2-dicarboxyethyl)-AMP + GDP + phosphate + 2 H(+). The protein operates within purine metabolism; AMP biosynthesis via de novo pathway; AMP from IMP: step 1/2. Plays an important role in the de novo pathway of purine nucleotide biosynthesis. Catalyzes the first committed step in the biosynthesis of AMP from IMP. This is Adenylosuccinate synthetase from Shewanella amazonensis (strain ATCC BAA-1098 / SB2B).